The sequence spans 88 residues: Fe-S protein maturation auxiliary factor SufT (88 aa).

Belongs to the MIP18 family.

In terms of biological role, involved in the maturation of iron-sulfur (Fe-S) proteins. May function as a Fe-S cluster carrier. Is required for S.aureus growth under conditions that impose a high demand for lipoic acid, likely via a role in the maturation of the lipoate synthase LipA. Is non-essential for growth in conditions that impose a low demand for lipoic acid or Fe-S clusters, such as fermentative growth. Also seems to be involved in the maturation of AcnA, LeuCD and IlvD proteins, that utilize Fe-S cluster cofactors, and its role increases under conditions of high-demand for Fe-S clusters (respiratory growth). Is not involved in the repair of Fe-S clusters damaged by reactive oxygen species or in the physical protection of Fe-S clusters from oxidants. Displays synergy with the Fe-S cluster carrier Nfu. In Staphylococcus aureus (strain USA300), this protein is Fe-S protein maturation auxiliary factor SufT.